We begin with the raw amino-acid sequence, 500 residues long: Type-2 serine--tRNA ligase (500 aa).

Ala-305 is an L-serine binding site. Residue Cys-307 participates in Zn(2+) binding. Residue Arg-337 coordinates L-serine. Residues Arg-337 to Glu-339 and Arg-348 to Val-349 each bind ATP. L-serine is bound by residues Arg-354 to Glu-356 and Gln-401. Zn(2+) is bound at residue Glu-356. Glu-430 provides a ligand contact to ATP. Asn-433 is a binding site for L-serine. Position 459 (Cys-459) interacts with Zn(2+). Arg-466 lines the ATP pocket.

This sequence belongs to the class-II aminoacyl-tRNA synthetase family. Type-2 seryl-tRNA synthetase subfamily. In terms of assembly, homodimer. Zn(2+) is required as a cofactor.

The protein localises to the cytoplasm. It catalyses the reaction tRNA(Ser) + L-serine + ATP = L-seryl-tRNA(Ser) + AMP + diphosphate + H(+). It carries out the reaction tRNA(Sec) + L-serine + ATP = L-seryl-tRNA(Sec) + AMP + diphosphate + H(+). Its pathway is aminoacyl-tRNA biosynthesis; selenocysteinyl-tRNA(Sec) biosynthesis; L-seryl-tRNA(Sec) from L-serine and tRNA(Sec): step 1/1. Catalyzes the attachment of serine to tRNA(Ser). Is also able to aminoacylate tRNA(Sec) with serine, to form the misacylated tRNA L-seryl-tRNA(Sec), which will be further converted into selenocysteinyl-tRNA(Sec). The polypeptide is Type-2 serine--tRNA ligase (Methanothrix thermoacetophila (strain DSM 6194 / JCM 14653 / NBRC 101360 / PT) (Methanosaeta thermophila)).